We begin with the raw amino-acid sequence, 110 residues long: Integration host factor subunit beta (110 aa).

Belongs to the bacterial histone-like protein family. As to quaternary structure, heterodimer of an alpha and a beta chain.

Its function is as follows. This protein is one of the two subunits of integration host factor, a specific DNA-binding protein that functions in genetic recombination as well as in transcriptional and translational control. This Parvibaculum lavamentivorans (strain DS-1 / DSM 13023 / NCIMB 13966) protein is Integration host factor subunit beta.